The primary structure comprises 235 residues: Carbohydrate deacetylase (235 aa).

Residues histidine 61 and histidine 124 each contribute to the Mg(2+) site.

Belongs to the YdjC deacetylase family. The cofactor is Mg(2+).

Probably catalyzes the deacetylation of acetylated carbohydrates an important step in the degradation of oligosaccharides. The sequence is that of Carbohydrate deacetylase from Bacillus cereus (strain 03BB102).